A 569-amino-acid chain; its full sequence is GATOR1 complex protein NPRL3 (569 aa).

Disordered regions lie at residues 27 to 60 and 441 to 476; these read PFQR…DQDG and TPNA…SGDS. 2 stretches are compositionally biased toward polar residues: residues 34-52 and 441-468; these read HPAS…NNTG and TPNA…NSSA. Ser476 carries the phosphoserine modification.

It belongs to the NPR3 family. In terms of assembly, within the GATOR complex, component of the GATOR1 subcomplex, made of DEPDC5, NPRL2 and NPRL3. GATOR1 mediates the strong interaction of the GATOR complex with small GTPases Rag (RagA/RRAGA, RagB/RRAGB, RagC/RRAGC and/or RagD/RRAGD) heterodimers. GATOR1 interacts with GPR155/LYCHOS; interaction takes place in presence of cholesterol and prevents interaction between GATOR1 and KICSTOR.

Its subcellular location is the lysosome membrane. Functionally, as a component of the GATOR1 complex functions as an inhibitor of the amino acid-sensing branch of the mTORC1 pathway. In response to amino acid depletion, the GATOR1 complex has GTPase activating protein (GAP) activity and strongly increases GTP hydrolysis by RagA/RRAGA (or RagB/RRAGB) within heterodimeric Rag complexes, thereby turning them into their inactive GDP-bound form, releasing mTORC1 from lysosomal surface and inhibiting mTORC1 signaling. In the presence of abundant amino acids, the GATOR1 complex is negatively regulated by GATOR2, the other GATOR subcomplex, in this amino acid-sensing branch of the TORC1 pathway. The protein is GATOR1 complex protein NPRL3 of Mus musculus (Mouse).